The primary structure comprises 391 residues: Succinyl-diaminopimelate desuccinylase (391 aa).

H78 contributes to the Zn(2+) binding site. D80 is an active-site residue. D111 contributes to the Zn(2+) binding site. E145 serves as the catalytic Proton acceptor. The Zn(2+) site is built by E146, E174, and H360.

This sequence belongs to the peptidase M20A family. DapE subfamily. In terms of assembly, homodimer. The cofactor is Zn(2+). Co(2+) is required as a cofactor.

The enzyme catalyses N-succinyl-(2S,6S)-2,6-diaminopimelate + H2O = (2S,6S)-2,6-diaminopimelate + succinate. It functions in the pathway amino-acid biosynthesis; L-lysine biosynthesis via DAP pathway; LL-2,6-diaminopimelate from (S)-tetrahydrodipicolinate (succinylase route): step 3/3. Functionally, catalyzes the hydrolysis of N-succinyl-L,L-diaminopimelic acid (SDAP), forming succinate and LL-2,6-diaminopimelate (DAP), an intermediate involved in the bacterial biosynthesis of lysine and meso-diaminopimelic acid, an essential component of bacterial cell walls. In Acidovorax ebreus (strain TPSY) (Diaphorobacter sp. (strain TPSY)), this protein is Succinyl-diaminopimelate desuccinylase.